A 469-amino-acid polypeptide reads, in one-letter code: Interstitial collagenase (469 aa).

Positions 1–18 (MLSLPLLLLLLWGMGSHS) are cleaved as a signal peptide. A propeptide spans 19–99 (FPTVPSETRE…PRCGVPDVAE (81 aa)) (activation peptide). The Cysteine switch motif lies at 90-97 (PRCGVPDV). Residue Cys92 coordinates Zn(2+). The Ca(2+) site is built by Asp124 and Asp158. Positions 168 and 170 each coordinate Zn(2+). Residues Asp175, Gly176, Gly178, and Asn180 each coordinate Ca(2+). Position 183 (His183) interacts with Zn(2+). Arg190, Gly192, and Asp194 together coordinate Ca(2+). Position 196 (His196) interacts with Zn(2+). 3 residues coordinate Ca(2+): Asp198, Glu199, and Glu201. His218 is a Zn(2+) binding site. Glu219 is an active-site residue. Residues His222 and His228 each contribute to the Zn(2+) site. Residue Thr274 is modified to Phosphothreonine. Hemopexin repeat units follow at residues 275–324 (PEVC…WPQL), 325–371 (PNGL…FGFP), 374–422 (VKNI…FPGI), and 423–466 (GDKV…WFNC). An intrachain disulfide couples Cys278 to Cys466. Residues Asp285 and Gln329 each contribute to the Ca(2+) site. Phosphotyrosine; by PKDCC is present on Tyr360. Positions 378 and 427 each coordinate Ca(2+).

The protein belongs to the peptidase M10A family. Ca(2+) is required as a cofactor. Zn(2+) serves as cofactor. Post-translationally, tyrosine phosphorylated in platelets by PKDCC/VLK.

The protein resides in the secreted. The protein localises to the extracellular space. Its subcellular location is the extracellular matrix. The catalysed reaction is Cleavage of the triple helix of collagen at about three-quarters of the length of the molecule from the N-terminus, at 775-Gly-|-Ile-776 in the alpha1(I) chain. Cleaves synthetic substrates and alpha-macroglobulins at bonds where P1' is a hydrophobic residue.. Can be activated without removal of the activation peptide. Functionally, cleaves collagens of types I, II, and III at one site in the helical domain. Also cleaves collagens of types VII and X. The sequence is that of Interstitial collagenase (MMP1) from Equus caballus (Horse).